A 248-amino-acid polypeptide reads, in one-letter code: 1-(5-phosphoribosyl)-5-[(5-phosphoribosylamino)methylideneamino] imidazole-4-carboxamide isomerase (248 aa).

The active-site Proton acceptor is D8. D129 acts as the Proton donor in catalysis.

It belongs to the HisA/HisF family.

It is found in the cytoplasm. The enzyme catalyses 1-(5-phospho-beta-D-ribosyl)-5-[(5-phospho-beta-D-ribosylamino)methylideneamino]imidazole-4-carboxamide = 5-[(5-phospho-1-deoxy-D-ribulos-1-ylimino)methylamino]-1-(5-phospho-beta-D-ribosyl)imidazole-4-carboxamide. It participates in amino-acid biosynthesis; L-histidine biosynthesis; L-histidine from 5-phospho-alpha-D-ribose 1-diphosphate: step 4/9. The polypeptide is 1-(5-phosphoribosyl)-5-[(5-phosphoribosylamino)methylideneamino] imidazole-4-carboxamide isomerase (Rhizobium etli (strain ATCC 51251 / DSM 11541 / JCM 21823 / NBRC 15573 / CFN 42)).